Consider the following 263-residue polypeptide: Regulatory protein RecX (263 aa).

This sequence belongs to the RecX family.

Its subcellular location is the cytoplasm. Functionally, modulates RecA activity. The sequence is that of Regulatory protein RecX from Bacillus pumilus (strain SAFR-032).